A 629-amino-acid chain; its full sequence is MGLSRYLSRRHHWVIQYCALLLFLYFIYSYVAVSNDAPRLNEEIPVFREFSEDLPQGSRKFPEQKPAAALGDEALDPFEKYRGHEKIKWEDEVAYEKDKAREGPGEWGKPVKLPDDKETEKEALSLYKANGYNAYISDMISLNRSIKDIRHKECKKMTYSAKLPTVSVIFPFHEEHNSTLLRSVYSVINRSPPELLKEIILVDDFSEKPALRQPLEDFLKKNKIDHIVKILRTKKREGLIRGRQLGAQEATGEILIFLDAHSECNYNWLPPLLDPIADDYRTVVCPFVDVIDCETYEIRPQDEGARGSFDWAFNYKRLPLTKKDRENPTKPFDSPVMAGGYFAISAKWFWELGGYDEGLDIWGGEQYELSFKVWQCHGKMVDAPCSRVAHIYRCKYAPFKNAGMGDFVSRNYKRVAEVWMDEYKETLYKHRPGIGNADAGDLKLMKGIREKLQCKSFDWFMKEIAFDQDKYYPAIEPKASAEGEIRHVASNLCIDTQFKEQNQRFGLRKCASEDKDGGGEQDLRLTRWHDIRPKGRKICFDVSTSVDKAPIILFDCHSMKGNQLFKYRMPQKQIYHPVSGQCLTADENGKGFLHMKKCDSSSKLQQWAWQTIDQELLDQRQANEHKELE.

Residues 1-12 (MGLSRYLSRRHH) lie on the Cytoplasmic side of the membrane. A helical; Signal-anchor for type II membrane protein transmembrane segment spans residues 13–33 (WVIQYCALLLFLYFIYSYVAV). At 34 to 629 (SNDAPRLNEE…RQANEHKELE (596 aa)) the chain is on the lumenal side. N-linked (GlcNAc...) asparagine glycosylation is found at N143 and N177. Cystine bridges form between C154/C385, C376/C454, C493/C510, C539/C556, and C582/C598. The interval 163–275 (LPTVSVIFPF…YNWLPPLLDP (113 aa)) is catalytic subdomain A. Substrate contacts are provided by D204 and R236. The Mn(2+) site is built by D259 and H261. The tract at residues 331-393 (PFDSPVMAGG…PCSRVAHIYR (63 aa)) is catalytic subdomain B. W362 is a binding site for substrate. H390 serves as a coordination point for Mn(2+). R393 provides a ligand contact to substrate. The tract at residues 393-406 (RCKYAPFKNAGMGD) is flexible loop. The Ricin B-type lectin domain occupies 526–629 (TRWHDIRPKG…RQANEHKELE (104 aa)).

Belongs to the glycosyltransferase 2 family. GalNAc-T subfamily. It depends on Mn(2+) as a cofactor.

The protein localises to the golgi apparatus membrane. It catalyses the reaction L-seryl-[protein] + UDP-N-acetyl-alpha-D-galactosamine = a 3-O-[N-acetyl-alpha-D-galactosaminyl]-L-seryl-[protein] + UDP + H(+). It carries out the reaction L-threonyl-[protein] + UDP-N-acetyl-alpha-D-galactosamine = a 3-O-[N-acetyl-alpha-D-galactosaminyl]-L-threonyl-[protein] + UDP + H(+). It functions in the pathway protein modification; protein glycosylation. Its function is as follows. May catalyze the initial reaction in O-linked oligosaccharide biosynthesis, the transfer of an N-acetyl-D-galactosamine residue to a serine or threonine residue on the protein receptor. The chain is Putative polypeptide N-acetylgalactosaminyltransferase 10 from Caenorhabditis briggsae.